The sequence spans 359 residues: Double-stranded RNA-binding protein 3 (359 aa).

DRBM domains follow at residues 1–70 and 87–155; these read MYKN…ALSS and IYKN…SLRK. Over residues 266 to 280 the composition is skewed to basic and acidic residues; the sequence is EKKQSLDDPKPEMRI. Disordered stretches follow at residues 266-292 and 328-359; these read EKKQSLDDPKPEMRIKTSSPSPLSSSV and APPPKPNPNPNSSPFITRELGNGSQEKKSLPN. Positions 328 to 338 are enriched in pro residues; it reads APPPKPNPNPN.

Functionally, binds double-stranded RNA. This Arabidopsis thaliana (Mouse-ear cress) protein is Double-stranded RNA-binding protein 3 (DRB3).